A 141-amino-acid chain; its full sequence is Large ribosomal subunit protein uL16 (141 aa).

The protein belongs to the universal ribosomal protein uL16 family. In terms of assembly, part of the 50S ribosomal subunit.

In terms of biological role, binds 23S rRNA and is also seen to make contacts with the A and possibly P site tRNAs. The sequence is that of Large ribosomal subunit protein uL16 from Thermus thermophilus (strain ATCC BAA-163 / DSM 7039 / HB27).